A 1316-amino-acid chain; its full sequence is DNA-directed RNA polymerase subunit beta' (1316 aa).

Zn(2+) contacts are provided by cysteine 60, cysteine 62, cysteine 75, and cysteine 78. 3 residues coordinate Mg(2+): aspartate 535, aspartate 537, and aspartate 539. 4 residues coordinate Zn(2+): cysteine 891, cysteine 968, cysteine 975, and cysteine 978.

It belongs to the RNA polymerase beta' chain family. The RNAP catalytic core consists of 2 alpha, 1 beta, 1 beta' and 1 omega subunit. When a sigma factor is associated with the core the holoenzyme is formed, which can initiate transcription. Mg(2+) serves as cofactor. The cofactor is Zn(2+).

It catalyses the reaction RNA(n) + a ribonucleoside 5'-triphosphate = RNA(n+1) + diphosphate. DNA-dependent RNA polymerase catalyzes the transcription of DNA into RNA using the four ribonucleoside triphosphates as substrates. The polypeptide is DNA-directed RNA polymerase subunit beta' (Mycobacterium avium (strain 104)).